Here is a 321-residue protein sequence, read N- to C-terminus: Aspartate carbamoyltransferase catalytic subunit (321 aa).

The carbamoyl phosphate site is built by Arg65 and Thr66. L-aspartate is bound at residue Lys93. Residues Arg115, His143, and Gln146 each contribute to the carbamoyl phosphate site. Arg176 and Arg230 together coordinate L-aspartate. The carbamoyl phosphate site is built by Gly271 and Pro272.

The protein belongs to the aspartate/ornithine carbamoyltransferase superfamily. ATCase family. As to quaternary structure, heterododecamer (2C3:3R2) of six catalytic PyrB chains organized as two trimers (C3), and six regulatory PyrI chains organized as three dimers (R2).

The catalysed reaction is carbamoyl phosphate + L-aspartate = N-carbamoyl-L-aspartate + phosphate + H(+). Its pathway is pyrimidine metabolism; UMP biosynthesis via de novo pathway; (S)-dihydroorotate from bicarbonate: step 2/3. In terms of biological role, catalyzes the condensation of carbamoyl phosphate and aspartate to form carbamoyl aspartate and inorganic phosphate, the committed step in the de novo pyrimidine nucleotide biosynthesis pathway. The chain is Aspartate carbamoyltransferase catalytic subunit from Bartonella henselae (strain ATCC 49882 / DSM 28221 / CCUG 30454 / Houston 1) (Rochalimaea henselae).